The following is a 131-amino-acid chain: Transcription antitermination protein NusB (131 aa).

The protein belongs to the NusB family.

Functionally, involved in transcription antitermination. Required for transcription of ribosomal RNA (rRNA) genes. Binds specifically to the boxA antiterminator sequence of the ribosomal RNA (rrn) operons. The protein is Transcription antitermination protein NusB of Campylobacter curvus (strain 525.92).